The chain runs to 335 residues: Zinc transporter ZIP11 (335 aa).

The next 7 membrane-spanning stretches (helical) occupy residues 12 to 32, 44 to 64, 72 to 92, 187 to 207, 256 to 278, 283 to 300, and 315 to 335; these read LLGT…VFIF, LGFA…APAV, GFGA…AAFV, IALL…AVGV, FWYG…FAVV, VLPY…YVVM, and LASW…VGLG.

Belongs to the ZIP transporter (TC 2.A.5) family.

The protein localises to the cell membrane. It is found in the nucleus. It localises to the cytoplasm. The protein resides in the golgi apparatus. The catalysed reaction is Zn(2+)(in) = Zn(2+)(out). It catalyses the reaction Cu(2+)(in) = Cu(2+)(out). Functionally, zinc importer that regulates cytosolic zinc concentrations either via zinc influx from the extracellular compartment or efflux from intracellular organelles such as Golgi apparatus. May transport copper ions as well. The transport mechanism remains to be elucidated. This chain is Zinc transporter ZIP11 (Slc39a11), found in Rattus norvegicus (Rat).